A 145-amino-acid polypeptide reads, in one-letter code: 3-dehydroquinate dehydratase (145 aa).

The Proton acceptor role is filled by tyrosine 24. Substrate-binding residues include asparagine 75, histidine 81, and aspartate 88. The active-site Proton donor is the histidine 102. Substrate-binding positions include 103-104 (LS) and arginine 113.

Belongs to the type-II 3-dehydroquinase family. As to quaternary structure, homododecamer.

It catalyses the reaction 3-dehydroquinate = 3-dehydroshikimate + H2O. The protein operates within metabolic intermediate biosynthesis; chorismate biosynthesis; chorismate from D-erythrose 4-phosphate and phosphoenolpyruvate: step 3/7. Catalyzes a trans-dehydration via an enolate intermediate. This is 3-dehydroquinate dehydratase from Chelativorans sp. (strain BNC1).